The sequence spans 248 residues: 1-(5-phosphoribosyl)-5-[(5-phosphoribosylamino)methylideneamino] imidazole-4-carboxamide isomerase (248 aa).

The Proton acceptor role is filled by Asp-8. Asp-129 serves as the catalytic Proton donor.

This sequence belongs to the HisA/HisF family.

It is found in the cytoplasm. The catalysed reaction is 1-(5-phospho-beta-D-ribosyl)-5-[(5-phospho-beta-D-ribosylamino)methylideneamino]imidazole-4-carboxamide = 5-[(5-phospho-1-deoxy-D-ribulos-1-ylimino)methylamino]-1-(5-phospho-beta-D-ribosyl)imidazole-4-carboxamide. It functions in the pathway amino-acid biosynthesis; L-histidine biosynthesis; L-histidine from 5-phospho-alpha-D-ribose 1-diphosphate: step 4/9. The sequence is that of 1-(5-phosphoribosyl)-5-[(5-phosphoribosylamino)methylideneamino] imidazole-4-carboxamide isomerase from Rhizobium leguminosarum bv. trifolii (strain WSM2304).